A 95-amino-acid polypeptide reads, in one-letter code: Protein TusB (95 aa).

It belongs to the DsrH/TusB family. Heterohexamer, formed by a dimer of trimers. The hexameric TusBCD complex contains 2 copies each of TusB, TusC and TusD. The TusBCD complex interacts with TusE.

It localises to the cytoplasm. In terms of biological role, part of a sulfur-relay system required for 2-thiolation of 5-methylaminomethyl-2-thiouridine (mnm(5)s(2)U) at tRNA wobble positions. This Salmonella arizonae (strain ATCC BAA-731 / CDC346-86 / RSK2980) protein is Protein TusB.